The following is a 101-amino-acid chain: Co-chaperonin GroES (101 aa).

This sequence belongs to the GroES chaperonin family. Heptamer of 7 subunits arranged in a ring. Interacts with the chaperonin GroEL.

The protein resides in the cytoplasm. Functionally, together with the chaperonin GroEL, plays an essential role in assisting protein folding. The GroEL-GroES system forms a nano-cage that allows encapsulation of the non-native substrate proteins and provides a physical environment optimized to promote and accelerate protein folding. GroES binds to the apical surface of the GroEL ring, thereby capping the opening of the GroEL channel. The sequence is that of Co-chaperonin GroES from Lawsonia intracellularis.